The primary structure comprises 331 residues: Small ribosomal subunit protein uS2 (331 aa).

This sequence belongs to the universal ribosomal protein uS2 family.

The protein is Small ribosomal subunit protein uS2 of Rhodopseudomonas palustris (strain ATCC BAA-98 / CGA009).